Consider the following 578-residue polypeptide: MKDTIRQLIQQALTRLVTEGVLPEGLTPAIQVENARDKTHGDFASNIAMMLAKPAGMKPRDLAEKLIAALPADEQVSKVEIAGPGFLNFFQNTAALASRLDAALSDPQLSVRKAGAAQRVVVDLSAPNLAKEMHVGHLRSTIIGDGVANVLEFLGDTVIRQNHVGDWGTQFGMLLAYLQEKPATSDELSDLENFYRAAKQRFDESEEFAERARGLVVKLQAGDAECLTLWTRFKDISLSHCQQTYERLNVKLTPADVMGESAYNDDLANVVNDLKAAGLLVESNGAQCVFLEEFRTADDTPLPVIVQKAGGGYLYATTDLAAIRYRSKVLKADRALYFVDQRQALHFQQVFEVARRAGFVHEGMQLEHMGFGTMNGADGRPFKTRDGGTVKLIDLLDEAQERAYTLVKEKNPQVAEAELRSIAKAVGISAVKYADLSKHRASDYSFNFDQMLSFEGNTAPYLLYAYTRVAGVFRKLGTPFDASKGHIVLEAPQEQELAARLAQFNETLNNVAEKGTPHVLCAYLYDLAGLFSSFYENCPILGAENPDQQQSRLRLAALTGRTLKQGLDLLGLETLERM.

Residues 127–137 (PNLAKEMHVGH) carry the 'HIGH' region motif.

This sequence belongs to the class-I aminoacyl-tRNA synthetase family. In terms of assembly, monomer.

The protein localises to the cytoplasm. It catalyses the reaction tRNA(Arg) + L-arginine + ATP = L-arginyl-tRNA(Arg) + AMP + diphosphate. The sequence is that of Arginine--tRNA ligase from Pseudomonas syringae pv. tomato (strain ATCC BAA-871 / DC3000).